Consider the following 85-residue polypeptide: Cell division topological specificity factor (85 aa).

It belongs to the MinE family.

Prevents the cell division inhibition by proteins MinC and MinD at internal division sites while permitting inhibition at polar sites. This ensures cell division at the proper site by restricting the formation of a division septum at the midpoint of the long axis of the cell. The polypeptide is Cell division topological specificity factor (Dechloromonas aromatica (strain RCB)).